Consider the following 42-residue polypeptide: Protein YmiD (42 aa).

The sequence is that of Protein YmiD from Escherichia coli (strain K12).